The primary structure comprises 323 residues: Aspartate carbamoyltransferase catalytic subunit (323 aa).

Carbamoyl phosphate-binding residues include Arg-68 and Thr-69. Position 96 (Lys-96) interacts with L-aspartate. Residues Arg-118, His-148, and Gln-151 each contribute to the carbamoyl phosphate site. L-aspartate is bound by residues Arg-181 and Arg-236. Residues Gly-277 and Pro-278 each coordinate carbamoyl phosphate.

The protein belongs to the aspartate/ornithine carbamoyltransferase superfamily. ATCase family. As to quaternary structure, heterododecamer (2C3:3R2) of six catalytic PyrB chains organized as two trimers (C3), and six regulatory PyrI chains organized as three dimers (R2).

The catalysed reaction is carbamoyl phosphate + L-aspartate = N-carbamoyl-L-aspartate + phosphate + H(+). Its pathway is pyrimidine metabolism; UMP biosynthesis via de novo pathway; (S)-dihydroorotate from bicarbonate: step 2/3. Functionally, catalyzes the condensation of carbamoyl phosphate and aspartate to form carbamoyl aspartate and inorganic phosphate, the committed step in the de novo pyrimidine nucleotide biosynthesis pathway. This Verminephrobacter eiseniae (strain EF01-2) protein is Aspartate carbamoyltransferase catalytic subunit.